Consider the following 492-residue polypeptide: E3 ubiquitin-protein ligase ARIH2 (492 aa).

Positions 1 to 11 are enriched in polar residues; it reads MSVDMNSQGSD. The disordered stretch occupies residues 1 to 37; the sequence is MSVDMNSQGSDSNEEDYDPNCEEEEEEEEDPGDIEDY. A compositionally biased stretch (acidic residues) spans 12–36; it reads SNEEDYDPNCEEEEEEEEDPGDIED. The segment at 64–111 is UBA-like; it reads TYKESEGALHEHMTSLASVLKVSHSVAKLILVNFHWQVSEILDRYRSN. The tract at residues 134-343 is TRIAD supradomain; sequence PPHHCAVCMQ…SEYYECSRYK (210 aa). Zn(2+) contacts are provided by Cys-138, Cys-141, Cys-155, His-157, Cys-160, Cys-163, Cys-182, Cys-187, Cys-227, Cys-232, Cys-248, Cys-251, Cys-256, Cys-259, His-264, Cys-269, Cys-296, and Cys-299. The segment at 138–187 adopts an RING-type 1 zinc-finger fold; it reads CAVCMQFVRKENLLSLACQHQFCRSCWEQHCSVLVKDGVGVGISCMAQDC. The IBR-type zinc-finger motif lies at 207–269; it reads DKYRRYLFRD…RQMYHAPTDC (63 aa). The RING-type 2; atypical zinc finger occupies 296–325; it reads CPKCNICIEKNGGCNHMQCSKCKHDFCWMC. Cys-309 is an active-site residue. Residues Cys-314, Cys-317, Cys-322, Cys-325, His-332, and Cys-339 each coordinate Zn(2+). The residue at position 352 (Ser-352) is a Phosphoserine. An ariadne domain region spans residues 358–492; sequence REALKKYLFY…RTLLKDFHDT (135 aa).

Belongs to the RBR family. Ariadne subfamily. Interacts (via RING-type zinc finger 1) with UBE2L3. Interacts (via RING-type zinc finger 2) with UBE2N. Interacts with neddylated CUL5. Interacts (via RING-type 2) with GFI1B. Interacts with GFI1; prevents its ubiquitination and proteasomal degradation. Interacts with DCUN1D1 (via UBA-like domain); promotes DCUN1D1 ubiquitination. Post-translationally, ubiquitinated. Ubiquitination promotes proteasomal degradation.

It is found in the nucleus. Its subcellular location is the cytoplasm. It carries out the reaction [E2 ubiquitin-conjugating enzyme]-S-ubiquitinyl-L-cysteine + [acceptor protein]-L-lysine = [E2 ubiquitin-conjugating enzyme]-L-cysteine + [acceptor protein]-N(6)-ubiquitinyl-L-lysine.. It participates in protein modification; protein ubiquitination. Autoinhibited by the ariadne domain, which masks the second RING-type zinc finger that contains the active site and inhibits the E3 activity. Inhibition is relieved upon binding to neddylated cullin-RING ubiquitin ligase complexes, which activate the E3 ligase activity of ARIH1. Its function is as follows. E3 ubiquitin-protein ligase, which catalyzes ubiquitination of target proteins together with ubiquitin-conjugating enzyme E2 UBE2L3. Acts as an atypical E3 ubiquitin-protein ligase by working together with cullin-5-RING ubiquitin ligase complex (ECS complex, also named CRL5 complex) and initiating ubiquitination of ECS substrates: associates with ECS complex and specifically mediates addition of the first ubiquitin on ECS targets. The initial ubiquitin is then elongated. E3 ubiquitin-protein ligase activity is activated upon binding to neddylated form of the ECS complex. Mediates 'Lys-6', 'Lys-48'- and 'Lys-63'-linked polyubiquitination. May play a role in myelopoiesis. The polypeptide is E3 ubiquitin-protein ligase ARIH2 (Arih2) (Mus musculus (Mouse)).